Here is a 235-residue protein sequence, read N- to C-terminus: Large ribosomal subunit protein uL3 (235 aa).

N5-methylglutamine is present on Gln-151.

This sequence belongs to the universal ribosomal protein uL3 family. Part of the 50S ribosomal subunit. Forms a cluster with proteins L14 and L19. In terms of processing, methylated by PrmB.

Functionally, one of the primary rRNA binding proteins, it binds directly near the 3'-end of the 23S rRNA, where it nucleates assembly of the 50S subunit. In Rhodospirillum rubrum (strain ATCC 11170 / ATH 1.1.1 / DSM 467 / LMG 4362 / NCIMB 8255 / S1), this protein is Large ribosomal subunit protein uL3.